A 92-amino-acid polypeptide reads, in one-letter code: Putative regulatory protein CTN_0877 (92 aa).

Belongs to the RemA family.

This chain is Putative regulatory protein CTN_0877, found in Thermotoga neapolitana (strain ATCC 49049 / DSM 4359 / NBRC 107923 / NS-E).